The sequence spans 336 residues: MPKSALMSSSFQTSVSPRPLPVSCASRTAARKLSLYCSEGRTRCGMGQGKGWRWPGHRPPGLPSPTNRVGQSVPKWRPQPHKAAGGGRTIRDVKEAAFDVLDLGLLPYPQAWARQKQELARVAVGGRPTLLLVEHPAVLTLGRKAQEGENIVVTREYLAAQGIDVFAVERGGDVTYHGPGQLVAYAIFPVGRRVRDFLRLLENAVVTALGTLGLPDARPNPGYAGVYVDPREINGKTYDQKICSIGVAIKQNVALHGIGLNVCTNLDHFDLIVPCGLTDTQMTSVQREYDLRGLGSVSMEQAKKALTDAFALTFADYDWSLPGVAAGQEALSVASP.

The span at Met1–Ser16 shows a compositional bias: polar residues. Disordered stretches follow at residues Met1–Val22 and Gln48–Arg88. Residues Met1–Asp92 are unknown. Residues Val93–Pro336 are lipB domain. The BPL/LPL catalytic domain occupies Val124–Asp318. Residues Arg170–His177, Ser244–Gly246, and Gly257–Gly259 contribute to the substrate site. The Acyl-thioester intermediate role is filled by Cys275.

This sequence in the C-terminal section; belongs to the LipB family.

It localises to the cytoplasm. The enzyme catalyses octanoyl-[ACP] + L-lysyl-[protein] = N(6)-octanoyl-L-lysyl-[protein] + holo-[ACP] + H(+). The protein operates within protein modification; protein lipoylation via endogenous pathway; protein N(6)-(lipoyl)lysine from octanoyl-[acyl-carrier-protein]: step 1/2. Its function is as follows. Catalyzes the transfer of endogenously produced octanoic acid from octanoyl-acyl-carrier-protein onto the lipoyl domains of lipoate-dependent enzymes. Lipoyl-ACP can also act as a substrate although octanoyl-ACP is likely to be the physiological substrate. This is Octanoyltransferase from Deinococcus radiodurans (strain ATCC 13939 / DSM 20539 / JCM 16871 / CCUG 27074 / LMG 4051 / NBRC 15346 / NCIMB 9279 / VKM B-1422 / R1).